Reading from the N-terminus, the 590-residue chain is Protein O-linked-mannose beta-1,4-N-acetylglucosaminyltransferase 2 (590 aa).

Over 1 to 4 (MSVG) the chain is Cytoplasmic. Residues 5–25 (TLLNGLLVSIVAALLWKYSKL) form a helical; Signal-anchor for type II membrane protein membrane-spanning segment. Residues 26–590 (SEHAALLEEE…PFADVLMCRT (565 aa)) lie on the Lumenal side of the membrane. Asn-98, Asn-275, and Asn-553 each carry an N-linked (GlcNAc...) asparagine glycan. The Fibronectin type-III domain occupies 494–590 (RVRDPQCQTS…PFADVLMCRT (97 aa)).

It belongs to the glycosyltransferase 61 family.

The protein resides in the endoplasmic reticulum membrane. It carries out the reaction 3-O-(alpha-D-mannosyl)-L-threonyl-[protein] + UDP-N-acetyl-alpha-D-glucosamine = 3-O-(N-acetyl-beta-D-glucosaminyl-(1-&gt;4)-alpha-D-mannosyl)-L-threonyl-[protein] + UDP + H(+). Its pathway is protein modification; protein glycosylation. Its function is as follows. O-linked mannose beta-1,4-N-acetylglucosaminyltransferase that transfers UDP-N-acetyl-D-glucosamine to the 4-position of the mannose to generate N-acetyl-D-glucosamine-beta-1,4-O-D-mannosylprotein. Involved in the biosynthesis of the phosphorylated O-mannosyl trisaccharide (N-acetylgalactosamine-beta-3-N-acetylglucosamine-beta-4-(phosphate-6-)mannose), a carbohydrate structure present in alpha-dystroglycan (DAG1), which is required for binding laminin G-like domain-containing extracellular proteins with high affinity. The sequence is that of Protein O-linked-mannose beta-1,4-N-acetylglucosaminyltransferase 2 (pomgnt2) from Takifugu rubripes (Japanese pufferfish).